A 1230-amino-acid chain; its full sequence is Ubiquitin carboxyl-terminal hydrolase 15 (1230 aa).

Positions 39 to 179 constitute an MATH domain; it reads EDSFTWNIPD…EGTLNITAYV (141 aa). Residues 205-536 form the USP domain; that stretch reads VGFRNQGATC…SAYMLVYIRQ (332 aa). The active-site Nucleophile is the C214. H465 functions as the Proton acceptor in the catalytic mechanism.

This sequence belongs to the peptidase C19 family. As to quaternary structure, interacts with PEX6; promoting association with the PEX1-PEX6 ATPase complex.

Its subcellular location is the cytoplasm. The protein localises to the cytosol. It is found in the peroxisome. The catalysed reaction is Thiol-dependent hydrolysis of ester, thioester, amide, peptide and isopeptide bonds formed by the C-terminal Gly of ubiquitin (a 76-residue protein attached to proteins as an intracellular targeting signal).. Deubiquitinase involved in peroxisome import by mediating deubiquitination of the peroxisomal import receptor PEX5. Catalyzes deubiquitination of both monoubiquitiated and polyubiquitinated forms of PEX5 following its retrotranslocation into the cytosol, resetting PEX5 for a subsequent import cycle. The protein is Ubiquitin carboxyl-terminal hydrolase 15 of Saccharomyces cerevisiae (strain ATCC 204508 / S288c) (Baker's yeast).